The sequence spans 166 residues: NAD(P)H-quinone oxidoreductase subunit I, chloroplastic (166 aa).

2 4Fe-4S ferredoxin-type domains span residues 55-84 (GRIH…VDWK) and 95-124 (LNYS…MTEE). The [4Fe-4S] cluster site is built by cysteine 64, cysteine 67, cysteine 70, cysteine 74, cysteine 104, cysteine 107, cysteine 110, and cysteine 114.

This sequence belongs to the complex I 23 kDa subunit family. As to quaternary structure, NDH is composed of at least 16 different subunits, 5 of which are encoded in the nucleus. The cofactor is [4Fe-4S] cluster.

It is found in the plastid. Its subcellular location is the chloroplast thylakoid membrane. The enzyme catalyses a plastoquinone + NADH + (n+1) H(+)(in) = a plastoquinol + NAD(+) + n H(+)(out). It carries out the reaction a plastoquinone + NADPH + (n+1) H(+)(in) = a plastoquinol + NADP(+) + n H(+)(out). Functionally, NDH shuttles electrons from NAD(P)H:plastoquinone, via FMN and iron-sulfur (Fe-S) centers, to quinones in the photosynthetic chain and possibly in a chloroplast respiratory chain. The immediate electron acceptor for the enzyme in this species is believed to be plastoquinone. Couples the redox reaction to proton translocation, and thus conserves the redox energy in a proton gradient. The chain is NAD(P)H-quinone oxidoreductase subunit I, chloroplastic from Raillardella argentea (Silky raillardella).